The sequence spans 236 residues: Carbonyl reductase family member 4 (236 aa).

NADP(+) is bound by residues 11–14, 34–35, Asp-55, and 82–84; these read SRGI, RD, and SAG. Ser-134 serves as a coordination point for substrate. NADP(+) contacts are provided by residues Tyr-147, Lys-151, and 180–182; that span reads IHT. Tyr-147 acts as the Proton acceptor in catalysis.

It belongs to the short-chain dehydrogenases/reductases (SDR) family. In terms of assembly, homotetramer (in vitro). Heterotetramer with HSD17B8; contains two molecules each of HSD17B8 and CBR4.

It is found in the mitochondrion matrix. The protein operates within lipid metabolism; fatty acid biosynthesis. Functionally, the heterotetramer with HSD17B8 has NADH-dependent 3-ketoacyl-acyl carrier protein reductase activity, and thereby plays a role in mitochondrial fatty acid biosynthesis. Within the heterotetramer, HSD17B8 binds NADH; CBR4 binds NADPD. The homotetramer has NADPH-dependent quinone reductase activity. Both homotetramer and the heterotetramer have broad in vitro substrate specificity and can reduce 9,10-phenanthrenequinone, 1,4-benzoquinone and various other o-quinones and p-quinones. The polypeptide is Carbonyl reductase family member 4 (cbr4) (Xenopus tropicalis (Western clawed frog)).